Reading from the N-terminus, the 858-residue chain is Leucine--tRNA ligase (858 aa).

The short motif at 42–52 (PYPSGRLHMGH) is the 'HIGH' region element. Positions 618–622 (KMSKS) match the 'KMSKS' region motif. Lys621 is a binding site for ATP.

It belongs to the class-I aminoacyl-tRNA synthetase family.

It is found in the cytoplasm. It carries out the reaction tRNA(Leu) + L-leucine + ATP = L-leucyl-tRNA(Leu) + AMP + diphosphate. In Photobacterium profundum (strain SS9), this protein is Leucine--tRNA ligase.